The chain runs to 161 residues: Putative acetyltransferase SAV0762 (161 aa).

This sequence belongs to the transferase hexapeptide repeat family.

The chain is Putative acetyltransferase SAV0762 from Staphylococcus aureus (strain Mu50 / ATCC 700699).